Reading from the N-terminus, the 1078-residue chain is Exportin-1 (1078 aa).

An Importin N-terminal domain is found at 34 to 100 (AQQVLTQFQA…RNYIVAVMIK (67 aa)).

This sequence belongs to the exportin family. As to quaternary structure, interacts with php4.

It localises to the nucleus. Its function is as follows. Receptor for the leucine-rich nuclear export signal (NES). The protein is Exportin-1 (xpo1) of Schizosaccharomyces pombe (strain 972 / ATCC 24843) (Fission yeast).